The sequence spans 395 residues: 1-deoxy-D-xylulose 5-phosphate reductoisomerase (395 aa).

NADPH contacts are provided by Thr-10, Gly-11, Ser-12, Ile-13, Arg-37, Gln-38, and Asn-124. A 1-deoxy-D-xylulose 5-phosphate-binding site is contributed by Lys-125. NADPH is bound at residue Glu-126. Residue Asp-150 coordinates Mn(2+). The 1-deoxy-D-xylulose 5-phosphate site is built by Ser-151, Glu-152, Ser-179, and His-202. Position 152 (Glu-152) interacts with Mn(2+). Residue Gly-208 coordinates NADPH. Ser-215, Asn-220, Lys-221, and Glu-224 together coordinate 1-deoxy-D-xylulose 5-phosphate. Glu-224 is a Mn(2+) binding site.

Belongs to the DXR family. It depends on Mg(2+) as a cofactor. The cofactor is Mn(2+).

The catalysed reaction is 2-C-methyl-D-erythritol 4-phosphate + NADP(+) = 1-deoxy-D-xylulose 5-phosphate + NADPH + H(+). The protein operates within isoprenoid biosynthesis; isopentenyl diphosphate biosynthesis via DXP pathway; isopentenyl diphosphate from 1-deoxy-D-xylulose 5-phosphate: step 1/6. Functionally, catalyzes the NADPH-dependent rearrangement and reduction of 1-deoxy-D-xylulose-5-phosphate (DXP) to 2-C-methyl-D-erythritol 4-phosphate (MEP). The polypeptide is 1-deoxy-D-xylulose 5-phosphate reductoisomerase (Cupriavidus pinatubonensis (strain JMP 134 / LMG 1197) (Cupriavidus necator (strain JMP 134))).